The following is a 271-amino-acid chain: Methylthioribulose-1-phosphate dehydratase (271 aa).

Cys-123 contacts substrate. Zn(2+) contacts are provided by His-141 and His-143. Catalysis depends on Glu-166, which acts as the Proton donor/acceptor. Position 231 (His-231) interacts with Zn(2+).

It belongs to the aldolase class II family. MtnB subfamily. It depends on Zn(2+) as a cofactor.

It is found in the cytoplasm. The catalysed reaction is 5-(methylsulfanyl)-D-ribulose 1-phosphate = 5-methylsulfanyl-2,3-dioxopentyl phosphate + H2O. The protein operates within amino-acid biosynthesis; L-methionine biosynthesis via salvage pathway; L-methionine from S-methyl-5-thio-alpha-D-ribose 1-phosphate: step 2/6. In terms of biological role, catalyzes the dehydration of methylthioribulose-1-phosphate (MTRu-1-P) into 2,3-diketo-5-methylthiopentyl-1-phosphate (DK-MTP-1-P). This is Methylthioribulose-1-phosphate dehydratase from Candida dubliniensis (strain CD36 / ATCC MYA-646 / CBS 7987 / NCPF 3949 / NRRL Y-17841) (Yeast).